The following is a 736-amino-acid chain: ABC transporter G family member 16 (736 aa).

An ABC transporter domain is found at 88 to 332; the sequence is LDFHDLVPWR…FAGFGNPIPE (245 aa). 125 to 132 serves as a coordination point for ATP; it reads GASGSGKS. 7 helical membrane passes run 410 to 430, 449 to 469, 484 to 504, 525 to 545, 569 to 589, 590 to 610, and 709 to 729; these read SVIN…PFWI, LLGM…TVFW, FFAF…PVFL, VLSH…AFAV, ASFW…PHVM, LGYT…GFFI, and LLIT…CLLL. Residues 430-640 form the ABC transmembrane type-2 domain; it reads IEIKTLTRRS…PYEAVLQNEF (211 aa).

The protein belongs to the ABC transporter superfamily. ABCG family. Eye pigment precursor importer (TC 3.A.1.204) subfamily.

The protein resides in the membrane. This chain is ABC transporter G family member 16 (ABCG16), found in Arabidopsis thaliana (Mouse-ear cress).